An 87-amino-acid chain; its full sequence is Putative defensin-like protein 238 (87 aa).

The N-terminal stretch at 1–23 (MRSITWFIVFCVFMFIALNHVKG) is a signal peptide. 4 disulfide bridges follow: Cys30/Cys87, Cys40/Cys65, Cys48/Cys78, and Cys63/Cys80.

This sequence belongs to the DEFL family.

It is found in the secreted. In Arabidopsis thaliana (Mouse-ear cress), this protein is Putative defensin-like protein 238 (SCRL16).